The following is an 81-amino-acid chain: Carboxysome shell vertex protein CsoS4B (81 aa).

The BMV domain maps to 1–77 (MEVMRVRSDL…TDLTIGGIID (77 aa)).

It belongs to the CcmL/EutN family. CsoS4 subfamily. As to quaternary structure, homopentamer.

The protein localises to the carboxysome. Functionally, probably forms vertices in the carboxysome. Has been modeled to induce curvature upon insertion into an otherwise flat hexagonal layer of major carboxysome subunits. A minor shell protein, only 12 pentamers of CsoS4A/CsoS4B are calculated to be present in each carboxysome. The 2 CsoS4 proteins contribute to the impermeability of the carboxysome to CO(2). Its central pore is probably too small to allow passage of metabolites; its function might be to anchor different proteins or metabolites to the carboxysome. In terms of biological role, unlike beta-carboxysomes, alpha-carboxysomes (Cb) can form without cargo protein. CsoS2 is essential for Cb formation and is also capable of targeting foreign proteins to the Cb. The Cb shell assembles with the aid of CsoS2; CsoS1A, CsoS1B and CsoS1C form the majority of the shell while CsoS4A and CsoS4B form vertices. CsoS1D forms pseudohexamers that probably control metabolite flux into and out of the shell. This chain is Carboxysome shell vertex protein CsoS4B, found in Halothiobacillus neapolitanus (strain ATCC 23641 / c2) (Thiobacillus neapolitanus).